The chain runs to 319 residues: GTP 3',8-cyclase (319 aa).

A Radical SAM core domain is found at 4–227; it reads KHGRKINYLR…VETEKSSTAL (224 aa). Position 13 (arginine 13) interacts with GTP. [4Fe-4S] cluster contacts are provided by cysteine 20 and cysteine 24. Tyrosine 26 contributes to the S-adenosyl-L-methionine binding site. Cysteine 27 contributes to the [4Fe-4S] cluster binding site. Residue arginine 63 participates in GTP binding. Glycine 67 serves as a coordination point for S-adenosyl-L-methionine. Position 94 (threonine 94) interacts with GTP. Serine 118 provides a ligand contact to S-adenosyl-L-methionine. Position 155 (lysine 155) interacts with GTP. Position 189 (methionine 189) interacts with S-adenosyl-L-methionine. Residues cysteine 249 and cysteine 252 each coordinate [4Fe-4S] cluster. Position 254-256 (254-256) interacts with GTP; that stretch reads RVR. Cysteine 266 serves as a coordination point for [4Fe-4S] cluster.

It belongs to the radical SAM superfamily. MoaA family. As to quaternary structure, monomer and homodimer. The cofactor is [4Fe-4S] cluster.

It catalyses the reaction GTP + AH2 + S-adenosyl-L-methionine = (8S)-3',8-cyclo-7,8-dihydroguanosine 5'-triphosphate + 5'-deoxyadenosine + L-methionine + A + H(+). Its pathway is cofactor biosynthesis; molybdopterin biosynthesis. Catalyzes the cyclization of GTP to (8S)-3',8-cyclo-7,8-dihydroguanosine 5'-triphosphate. This Clostridium botulinum (strain ATCC 19397 / Type A) protein is GTP 3',8-cyclase.